The following is a 383-amino-acid chain: Acetylornithine deacetylase (383 aa).

Histidine 80 is a Zn(2+) binding site. Residue aspartate 82 is part of the active site. Zn(2+) is bound at residue aspartate 112. The active site involves glutamate 144. Positions 145, 169, and 355 each coordinate Zn(2+).

It belongs to the peptidase M20A family. ArgE subfamily. As to quaternary structure, homodimer. It depends on Zn(2+) as a cofactor. Co(2+) serves as cofactor. The cofactor is glutathione.

It localises to the cytoplasm. It carries out the reaction N(2)-acetyl-L-ornithine + H2O = L-ornithine + acetate. Its pathway is amino-acid biosynthesis; L-arginine biosynthesis; L-ornithine from N(2)-acetyl-L-ornithine (linear): step 1/1. Catalyzes the hydrolysis of the amide bond of N(2)-acetylated L-amino acids. Cleaves the acetyl group from N-acetyl-L-ornithine to form L-ornithine, an intermediate in L-arginine biosynthesis pathway, and a branchpoint in the synthesis of polyamines. In Shigella boydii serotype 4 (strain Sb227), this protein is Acetylornithine deacetylase.